The following is a 509-amino-acid chain: Dihydrolipoyl dehydrogenase, mitochondrial (509 aa).

The transit peptide at 1–35 (MQSWSRVYRSLAKKGHFNRISHGLQGVSSVPLRTY) directs the protein to the mitochondrion. At K66 the chain carries N6-acetyllysine; alternate. K66 is modified (N6-succinyllysine; alternate). FAD contacts are provided by residues 71-80 (EKNETLGGTC) and K89. A disulfide bridge connects residues C80 and C85. N6-acetyllysine; alternate is present on residues K104, K122, K132, and K143. N6-succinyllysine; alternate occurs at positions 104, 122, 132, and 143. G154 lines the FAD pocket. Residues K159 and K166 each carry the N6-succinyllysine modification. 183–185 (TGS) is a binding site for FAD. Residues 220–227 (GAGVIGVE) and E243 each bind NAD(+). An N6-succinyllysine mark is found at K273 and K277. V278 is a binding site for NAD(+). Phosphoserine occurs at positions 285 and 297. Position 314 (G314) interacts with NAD(+). N6-acetyllysine; alternate is present on K334. An N6-succinyllysine; alternate modification is found at K334. K346 is subject to N6-acetyllysine. FAD contacts are provided by residues D355 and 361-364 (MLAH). K410 is modified (N6-acetyllysine; alternate). Residue K410 is modified to N6-succinyllysine; alternate. K417 and K420 each carry N6-acetyllysine. An N6-succinyllysine modification is found at K430. The active-site Proton acceptor is the H487. An N6-acetyllysine; alternate modification is found at K505. Residue K505 is modified to N6-succinyllysine; alternate.

This sequence belongs to the class-I pyridine nucleotide-disulfide oxidoreductase family. As to quaternary structure, homodimer. Part of the multimeric pyruvate dehydrogenase complex that contains multiple copies of pyruvate dehydrogenase (subunits PDHA (PDHA1 or PDHA2) and PDHB, E1), dihydrolipoamide acetyltransferase (DLAT, E2) and lipoamide dehydrogenase (DLD, E3). These subunits are bound to an inner core composed of about 48 DLAT and 12 PDHX molecules (by non covalent bonds). The 2-oxoglutarate dehydrogenase complex is composed of OGDH (2-oxoglutarate dehydrogenase; E1), DLST (dihydrolipoamide succinyltransferase; E2), DLD (dihydrolipoamide dehydrogenase; E3) and the assembly factor KGD4. It contains multiple copies of the three enzymatic components (E1, E2 and E3). In the nucleus, the 2-oxoglutarate dehydrogenase complex associates with KAT2A. Interacts with PDHX. Requires FAD as cofactor. Post-translationally, tyrosine phosphorylated. In terms of tissue distribution, expressed in liver (at protein level).

The protein localises to the mitochondrion matrix. It is found in the nucleus. It localises to the cell projection. Its subcellular location is the cilium. The protein resides in the flagellum. The protein localises to the cytoplasmic vesicle. It is found in the secretory vesicle. It localises to the acrosome. It catalyses the reaction N(6)-[(R)-dihydrolipoyl]-L-lysyl-[protein] + NAD(+) = N(6)-[(R)-lipoyl]-L-lysyl-[protein] + NADH + H(+). Functionally, lipoamide dehydrogenase is a component of the glycine cleavage system as well as an E3 component of three alpha-ketoacid dehydrogenase complexes (pyruvate-, alpha-ketoglutarate-, and branched-chain amino acid-dehydrogenase complex). The 2-oxoglutarate dehydrogenase complex is mainly active in the mitochondrion. A fraction of the 2-oxoglutarate dehydrogenase complex also localizes in the nucleus and is required for lysine succinylation of histones: associates with KAT2A on chromatin and provides succinyl-CoA to histone succinyltransferase KAT2A. In monomeric form may have additional moonlighting function as serine protease. Involved in the hyperactivation of spermatazoa during capacitation and in the spermatazoal acrosome reaction. In Mus musculus (Mouse), this protein is Dihydrolipoyl dehydrogenase, mitochondrial (Dld).